The sequence spans 163 residues: Small ribosomal subunit protein bS18c (163 aa).

Disordered regions lie at residues 1 to 54 (MYTS…PGDR) and 121 to 163 (ITGP…SSDC). Residues 7-48 (PFHKSKQTFHKSKQTFRKSKQTFRKFKQPFRKPKQPFRRRPR) are compositionally biased toward basic residues. The segment covering 140-163 (NSNRNLRNSNQTLRNNNRNLSSDC) has biased composition (low complexity).

Belongs to the bacterial ribosomal protein bS18 family. In terms of assembly, part of the 30S ribosomal subunit.

The protein resides in the plastid. It is found in the chloroplast. This is Small ribosomal subunit protein bS18c from Oryza nivara (Indian wild rice).